Consider the following 433-residue polypeptide: E3 ubiquitin-protein ligase RNF26 (433 aa).

Helical transmembrane passes span 24-44 (LNFLLVSSLLASLAWLLAFVY), 60-80 (GVLLSLLALIEAVVRFTCGGL), 147-169 (VINSLVNICLIGTQNLFSLVLAL), 183-203 (VVAAFLAHISSSAVAMAILLW), and 220-240 (LASFVLVNLTGLVLLACVLAV). The RING-type zinc-finger motif lies at 380–422 (CVICQDQSKTVLLLPCRHLCLCQACTEILMRHPVYHRNCPLCR).

In terms of assembly, interacts with INCA1. Interacts with TMEM43, ENDOD1, TMEM33 and TMED1 to form a complex capable of modulating innate immune signaling through the cGAS-STING pathway. Interacts with UBE2J1; this interaction is important for SQSTM1 ubiquitination. As to expression, ubiquitous. Up-regulated in several cancer cell lines.

Its subcellular location is the endoplasmic reticulum membrane. The enzyme catalyses S-ubiquitinyl-[E2 ubiquitin-conjugating enzyme]-L-cysteine + [acceptor protein]-L-lysine = [E2 ubiquitin-conjugating enzyme]-L-cysteine + N(6)-ubiquitinyl-[acceptor protein]-L-lysine.. It participates in protein modification; protein ubiquitination. Functionally, E3 ubiquitin-protein ligase that plays a key role in endosome organization by retaining vesicles in the perinuclear cloud. Acts as a platform for perinuclear positioning of the endosomal system by mediating ubiquitination of SQSTM1 through interaction with the ubiquitin conjugating enzyme UBE2J1. Ubiquitinated SQSTM1 attracts specific vesicle-associated adapters, forming a molecular bridge that restrains cognate vesicles in the perinuclear region and organizes the endosomal pathway for efficient cargo transport. Also acts as a regulator of type I interferon production in response to viral infection by mediating the formation of 'Lys-11'-linked polyubiquitin chains on TMEM173/STING, leading to stabilize TMEM173/STING. Also required to limit type I interferon response by promoting autophagic degradation of IRF3. This is E3 ubiquitin-protein ligase RNF26 from Homo sapiens (Human).